The sequence spans 197 residues: MAVVPIRIVGDPVLHTPTEPVPVGPDGSLPDDLPALIQDMFDTMDAANGVGLAANQIGVAKRLFVYDCAPTRGQTTRRRGVVINPVLETSEVPETMPDPDEDEEGCLSVPGENFPTGRADWARVTGLDADGSPITLEGEDLFARMLQHETGHLDGFLYLDRLVGRYARAAKKAVKRNGWGVPGLSWMPGEVPDPFGH.

Positions 106 and 148 each coordinate Fe cation. Glu149 is a catalytic residue. His152 serves as a coordination point for Fe cation.

Belongs to the polypeptide deformylase family. The cofactor is Fe(2+).

The enzyme catalyses N-terminal N-formyl-L-methionyl-[peptide] + H2O = N-terminal L-methionyl-[peptide] + formate. Its function is as follows. Removes the formyl group from the N-terminal Met of newly synthesized proteins. Requires at least a dipeptide for an efficient rate of reaction. N-terminal L-methionine is a prerequisite for activity but the enzyme has broad specificity at other positions. The polypeptide is Peptide deformylase (Mycolicibacterium smegmatis (strain ATCC 700084 / mc(2)155) (Mycobacterium smegmatis)).